Reading from the N-terminus, the 245-residue chain is Ribonuclease P protein component 3 (245 aa).

It belongs to the eukaryotic/archaeal RNase P protein component 3 family. Consists of a catalytic RNA component and at least 4-5 protein subunits.

The protein localises to the cytoplasm. It carries out the reaction Endonucleolytic cleavage of RNA, removing 5'-extranucleotides from tRNA precursor.. Its function is as follows. Part of ribonuclease P, a protein complex that generates mature tRNA molecules by cleaving their 5'-ends. The polypeptide is Ribonuclease P protein component 3 (Methanothermobacter thermautotrophicus (strain ATCC 29096 / DSM 1053 / JCM 10044 / NBRC 100330 / Delta H) (Methanobacterium thermoautotrophicum)).